The primary structure comprises 352 residues: Pre-rRNA-processing protein ipi1 (352 aa).

The protein belongs to the IPI1/TEX10 family. In terms of assembly, component of the RIX1 complex, composed of rrm-9/ipi1, rix1/ipi2 and ipi3 in a 1:2:2 stoichiometry. The complex interacts (via rix1) with mdn1 (via its hexameric AAA ATPase ring) and the pre-60S ribosome particles.

The protein resides in the nucleus. Its function is as follows. Component of the RIX1 complex required for processing of ITS2 sequences from 35S pre-rRNA. The chain is Pre-rRNA-processing protein ipi1 (rrm-9) from Neurospora crassa (strain ATCC 24698 / 74-OR23-1A / CBS 708.71 / DSM 1257 / FGSC 987).